A 535-amino-acid polypeptide reads, in one-letter code: Protein translocase subunit SecD (535 aa).

A run of 6 helical transmembrane segments spans residues 5-25 (LTWK…GIIG), 377-397 (AIIG…GAGI), 402-421 (SLLL…GAVL), 425-444 (GIAG…VLIF), 469-489 (WLTI…LFLF), and 496-516 (GFAV…VFVS).

It belongs to the SecD/SecF family. SecD subfamily. As to quaternary structure, forms a complex with SecF. Part of the essential Sec protein translocation apparatus which comprises SecA, SecYEG and auxiliary proteins SecDF. Other proteins may also be involved.

The protein localises to the cell inner membrane. In terms of biological role, part of the Sec protein translocase complex. Interacts with the SecYEG preprotein conducting channel. SecDF uses the proton motive force (PMF) to complete protein translocation after the ATP-dependent function of SecA. In Koribacter versatilis (strain Ellin345), this protein is Protein translocase subunit SecD.